The following is a 275-amino-acid chain: MKKKNIILISVLLGALLLLTGCSMDPSQNTDGFFSTYLIQPFTSFIMFVAKFVGGNYGIAIIITTLLIRALIMPLNLRTAKAQMGMQSKMAVAKPEIDEIQARLKRATSKEEQATIQKEMMAVYSKYNINPMQMGCLPLLIQMPILMAFYYAIRGSSEIASHTFLWFNLGSPDMVLAIIAGLVYLAQYFVSMIGYSPEQKKQMKIIGLMSPIMILFVSFTAPSALALYWAVGGLFLAGQTLLTKKLYMNKHPEIKVMEQEEKEFEQIVEEQKKEK.

A signal peptide spans 1–21 (MKKKNIILISVLLGALLLLTG). The N-palmitoyl cysteine moiety is linked to residue cysteine 22. Cysteine 22 is lipidated: S-diacylglycerol cysteine. 4 helical membrane-spanning segments follow: residues 48-68 (FVAKFVGGNYGIAIIITTLLI), 133-153 (QMGCLPLLIQMPILMAFYYAI), 174-194 (MVLAIIAGLVYLAQYFVSMIG), and 212-232 (IMILFVSFTAPSALALYWAVG).

This sequence belongs to the OXA1/ALB3/YidC family. Type 2 subfamily.

The protein localises to the cell membrane. Required for the insertion and/or proper folding and/or complex formation of integral membrane proteins into the membrane. Involved in integration of membrane proteins that insert both dependently and independently of the Sec translocase complex, as well as at least some lipoproteins. This Listeria monocytogenes serotype 4b (strain F2365) protein is Membrane protein insertase YidC 2.